Consider the following 333-residue polypeptide: Large ribosomal subunit protein uL3 (333 aa).

Composition is skewed to basic residues over residues 1 to 10 (MGMKRNRPRR) and 17 to 26 (PRKRAKRPVP). Residues 1-29 (MGMKRNRPRRGSLAFSPRKRAKRPVPKIR) are disordered.

Belongs to the universal ribosomal protein uL3 family. In terms of assembly, part of the 50S ribosomal subunit. Forms a cluster with proteins L14 and L24e.

Its function is as follows. One of the primary rRNA binding proteins, it binds directly near the 3'-end of the 23S rRNA, where it nucleates assembly of the 50S subunit. This Methanococcus aeolicus (strain ATCC BAA-1280 / DSM 17508 / OCM 812 / Nankai-3) protein is Large ribosomal subunit protein uL3.